We begin with the raw amino-acid sequence, 40 residues long: Large ribosomal subunit protein bL36A (40 aa).

This sequence belongs to the bacterial ribosomal protein bL36 family.

The protein is Large ribosomal subunit protein bL36A of Renibacterium salmoninarum (strain ATCC 33209 / DSM 20767 / JCM 11484 / NBRC 15589 / NCIMB 2235).